Consider the following 654-residue polypeptide: Interferon-induced GTP-binding protein Mx1 (654 aa).

Met1 is modified (N-acetylmethionine). Composition is skewed to basic and acidic residues over residues 1-12 (MVLSDLDIKEPD) and 23-32 (DMVREHETES). The tract at residues 1–33 (MVLSDLDIKEPDSPESGLNGSDDMVREHETESK) is disordered. Residues 62-335 (DLALPAIAVI…LIMHICKTLP (274 aa)) enclose the Dynamin-type G domain. Residues 72-79 (GDQSSGKS) form a G1 motif region. Position 72–79 (72–79 (GDQSSGKS)) interacts with GTP. The G2 motif stretch occupies residues 97-99 (VTR). A G3 motif region spans residues 173-176 (DLPG). Residues 173–177 (DLPGI) and 242–245 (TKPD) each bind GTP. The interval 242-245 (TKPD) is G4 motif. The interval 274-277 (KCRG) is G5 motif. A bundle signaling element (BSE) region spans residues 336 to 361 (LLENQIKETHQRITEELQKYGKDIPE). Positions 361 to 528 (EEESEKMFSL…HFQMEQLVYC (168 aa)) are middle domain. The stalk stretch occupies residues 362-624 (EESEKMFSLI…KDQYDWLLKE (263 aa)). Positions 544–563 (EAEEEKKKKSNHYYQSEDSE) are disordered. A critical for lipid-binding region spans residues 549 to 552 (KKKK). A GED domain is found at 566 to 654 (TAEIFQHLMA…ARQRLAKFPG (89 aa)).

Belongs to the TRAFAC class dynamin-like GTPase superfamily. Dynamin/Fzo/YdjA family. As to quaternary structure, homooligomer. Oligomerizes into multimeric filamentous or ring-like structures by virtue of its stalk domain. Oligomerization is critical for GTPase activity, protein stability, and recognition of viral target structures. Interacts with TRPC1, TRPC3, TRPC4, TRPC5, TRPC6 and TRPC7. Interacts with HSPA5. Interacts with DDX39A and DDX39B. Interacts with TUBB/TUBB5. ISGylated.

Its subcellular location is the cytoplasm. The protein resides in the endoplasmic reticulum membrane. It localises to the perinuclear region. Interferon-induced dynamin-like GTPase with antiviral activity. This chain is Interferon-induced GTP-binding protein Mx1 (MX1), found in Ovis aries (Sheep).